The primary structure comprises 1101 residues: Lysylphosphatidylglycerol biosynthesis bifunctional protein LysX (1101 aa).

A phosphatidylglycerol lysyltransferase region spans residues 1-601 (MTATRLVRAH…RLHSDGTAPD (601 aa)). Helical transmembrane passes span 18–38 (VPAA…LASV), 60–80 (FPDT…ALAA), 84–104 (IAWW…VTGL), 113–133 (DVGE…LLLA), 151–171 (VTLV…LELF), 183–200 (YALN…GAFS), and 207–227 (VNAL…VVLF). Residues 602–1101 (RIGPVGDGAD…TLPFPLAKPR (500 aa)) form a lysine--tRNA ligase region. A DNA-binding region (OB) is located at residues 662 to 740 (VTVSGRVLRA…SVLVTRWRLI (79 aa)). Residues D1013 and E1020 each contribute to the Mg(2+) site.

This sequence in the N-terminal section; belongs to the LPG synthetase family. It in the C-terminal section; belongs to the class-II aminoacyl-tRNA synthetase family. Mg(2+) is required as a cofactor.

It is found in the cell membrane. The enzyme catalyses tRNA(Lys) + L-lysine + ATP = L-lysyl-tRNA(Lys) + AMP + diphosphate. It carries out the reaction L-lysyl-tRNA(Lys) + a 1,2-diacyl-sn-glycero-3-phospho-(1'-sn-glycerol) = a 1,2-diacyl-sn-glycero-3-phospho-1'-(3'-O-L-lysyl)-sn-glycerol + tRNA(Lys). Catalyzes the production of L-lysyl-tRNA(Lys)transfer and the transfer of a lysyl group from L-lysyl-tRNA(Lys) to membrane-bound phosphatidylglycerol (PG), which produces lysylphosphatidylglycerol (LPG), one of the components of the bacterial membrane with a positive net charge. LPG synthesis contributes to the resistance to cationic antimicrobial peptides (CAMPs) and likely protects M.tuberculosis against the CAMPs produced by competiting microorganisms (bacteriocins). In fact, the modification of anionic phosphatidylglycerol with positively charged L-lysine results in repulsion of the peptides. The sequence is that of Lysylphosphatidylglycerol biosynthesis bifunctional protein LysX (lysX) from Mycolicibacterium gilvum (strain PYR-GCK) (Mycobacterium gilvum (strain PYR-GCK)).